Here is a 743-residue protein sequence, read N- to C-terminus: MMNMKIVLFSLLLFVIRWNIISCNKNDKNQGVDMNVLNNYENLFKFVKCEYCNEHTYVKGKKAPSDPQCADIKEECKELLKEKQYTDSVTYLMDGFKSANNSANNGKKNNAEEMKNLVNFLQSHKKLIKALKKNIESIQNKKHLIYKNKSYNPLLLSCVKKMNMLKENVDYIQKNQNLFKELMNQKATYSFVNTKKKIISLKSQGHKKETSQNQNENNDNQKYQEVNDEDDVNDEEDTNDDEDTNDEEDTNDDEDTNDDEDTNDEEDTNDEEDHENNNATAYELGIVPVNDVLNVNMKNMITGNNFMDVVKNTLAQSGGLGSNDLINFLNQGKEIGENLLNITKMNLGDKNNLESFPLDELNMLKDNLINYEFILDNLKTSVLNKLKDLLLRLLYKAYVSYKKRKAQEKGLPEPTVTNEEYVEELKKGILDMGIKLLFSKVKSLLKKLKNKIFPKKKEDNQAVDTKSMEEPKVKAQPALRGVEPTEDSNIMNSINNVMDEIDFFEKELIENNNTPNVVPPTQSKKKNKNETVSGMDENFDNHPENYFKEEYYYDENDDMEVKVKKIGVTLKKFEPLKNGNVSETIKLIHLGNKDKKHIEAINNDIQIIKQELQAIYNELMNYTNGNKNIQQIFQQNILENDVLNQETEEEMEKQVEAITKQIEAEVDALAPKNKEEEEKEKEKEEKEKEEKEKEKEEKEKEEKEKEEKEKEEKEEEKKEKEEEQEEEEEEEIVPENLTTEESK.

A signal peptide spans 1–23 (MMNMKIVLFSLLLFVIRWNIISC). Positions 77–235 (KELLKEKQYT…VNDEDDVNDE (159 aa)) are interaction with MSP1 and host SLC4A1/Band 3. Disordered stretches follow at residues 202-282 (KSQG…ATAY), 459-487 (DNQA…PTED), 512-540 (NNTP…ENFD), and 666-743 (VDAL…EESK). Residues 211 to 224 (SQNQNENNDNQKYQ) are compositionally biased toward polar residues. Tandem repeats lie at residues 226–231 (VNDEDD), 232–237 (VNDEED), 238–243 (TNDDED), 244–249 (TNDEED), 250–255 (TNDDED), 256–261 (TNDDED), 262–267 (TNDEED), and 268–273 (TNDEED). The tract at residues 226–273 (VNDEDDVNDEEDTNDDEDTNDEEDTNDDEDTNDDEDTNDEEDTNDEED) is 8 X 6 AA tandem repeats of [VT]-N-D-[ED]-[ED]-D. The span at 226–274 (VNDEDDVNDEEDTNDDEDTNDEEDTNDDEDTNDDEDTNDEEDTNDEEDH) shows a compositional bias: acidic residues. An interaction with MSP1 and host SLC4A1/Band 3 region spans residues 364 to 528 (LKDNLINYEF…PPTQSKKKNK (165 aa)). The segment covering 459–473 (DNQAVDTKSMEEPKV) has biased composition (basic and acidic residues). Residues 512-521 (NNTPNVVPPT) show a composition bias toward low complexity. The stretch at 644–733 (NQETEEEMEK…QEEEEEEEIV (90 aa)) forms a coiled coil. Residues 672 to 721 (KNKEEEEKEKEKEEKEKEEKEKEKEEKEKEEKEKEEKEKEEKEEEKKEKE) are compositionally biased toward basic and acidic residues. The span at 722 to 733 (EEQEEEEEEEIV) shows a compositional bias: acidic residues.

This sequence belongs to the plasmodium ABRA family. In terms of assembly, forms a complex composed of MSP1, MSP6, MSP7, MSP9 and MSP3; within the complex, MSP6 and MSP9 mediate the binding to the host erythrocyte. Interacts with MSP1 subunits p19 and p42; the interaction is direct. Interacts with host SLC4A1/Band 3 protein (via the 5ABC region). MSP1 subunits p19 or p42, and MSP9 form a co-ligand complex that interacts with host SLC4A1/Band 3 protein. Not glycosylated.

It is found in the cell membrane. It localises to the parasitophorous vacuole lumen. Its subcellular location is the secreted. Its function is as follows. During the asexual blood stage, involved in the sialic acid-independent (SAID) merozoite invasion of host erythrocytes by binding to host SLC4A1/Band 3 protein on the surface of the host erythrocyte. The sequence is that of Merozoite surface protein 9 from Plasmodium falciparum (isolate 3D7).